Here is a 399-residue protein sequence, read N- to C-terminus: tRNA-specific 2-thiouridylase MnmA (399 aa).

ATP is bound by residues 18–25 and Leu44; that span reads AMSGGVDS. Cys112 (nucleophile) is an active-site residue. A disulfide bond links Cys112 and Cys213. Gly136 contributes to the ATP binding site. Residues 163 to 165 are interaction with tRNA; it reads RDQ. The active-site Cysteine persulfide intermediate is the Cys213.

It belongs to the MnmA/TRMU family.

The protein localises to the cytoplasm. It carries out the reaction S-sulfanyl-L-cysteinyl-[protein] + uridine(34) in tRNA + AH2 + ATP = 2-thiouridine(34) in tRNA + L-cysteinyl-[protein] + A + AMP + diphosphate + H(+). Its function is as follows. Catalyzes the 2-thiolation of uridine at the wobble position (U34) of tRNA, leading to the formation of s(2)U34. The polypeptide is tRNA-specific 2-thiouridylase MnmA (Rhizobium rhizogenes (strain K84 / ATCC BAA-868) (Agrobacterium radiobacter)).